Here is a 406-residue protein sequence, read N- to C-terminus: Arginine deiminase (406 aa).

The Amidino-cysteine intermediate role is filled by Cys-396.

Belongs to the arginine deiminase family.

Its subcellular location is the cytoplasm. It catalyses the reaction L-arginine + H2O = L-citrulline + NH4(+). The protein operates within amino-acid degradation; L-arginine degradation via ADI pathway; carbamoyl phosphate from L-arginine: step 1/2. This chain is Arginine deiminase, found in Vibrio vulnificus (strain CMCP6).